We begin with the raw amino-acid sequence, 616 residues long: Chaperone protein HscA (616 aa).

This sequence belongs to the heat shock protein 70 family.

Chaperone involved in the maturation of iron-sulfur cluster-containing proteins. Has a low intrinsic ATPase activity which is markedly stimulated by HscB. Involved in the maturation of IscU. The chain is Chaperone protein HscA from Proteus mirabilis (strain HI4320).